A 729-amino-acid chain; its full sequence is Probable pre-mRNA-splicing factor ATP-dependent RNA helicase DEAH3 (729 aa).

Positions 75–244 (LNTLNSNQTL…FSGAPLMKVP (170 aa)) constitute a Helicase ATP-binding domain. Position 88–95 (88–95 (GETGSGKT)) interacts with ATP. Positions 191 to 194 (DEAH) match the DEAH box motif. The Helicase C-terminal domain maps to 269–449 (TVVQIHMCEP…NTVLTLKKLG (181 aa)).

This sequence belongs to the DEAD box helicase family. DEAH subfamily. PRP43 sub-subfamily.

The catalysed reaction is ATP + H2O = ADP + phosphate + H(+). Its function is as follows. May be involved in pre-mRNA splicing. The sequence is that of Probable pre-mRNA-splicing factor ATP-dependent RNA helicase DEAH3 from Arabidopsis thaliana (Mouse-ear cress).